The following is a 280-amino-acid chain: Large ribosomal subunit protein uL2 (280 aa).

The segment at 226 to 280 is disordered; that stretch reads NPIDHPHGGGEGRTSGGRHPVTPWGKPTKGAKTRNKKKASSQLIIRSRHAKKKGR. Composition is skewed to basic residues over residues 254 to 264 and 271 to 280; these read KGAKTRNKKKA and RSRHAKKKGR.

The protein belongs to the universal ribosomal protein uL2 family. Part of the 50S ribosomal subunit. Forms a bridge to the 30S subunit in the 70S ribosome.

In terms of biological role, one of the primary rRNA binding proteins. Required for association of the 30S and 50S subunits to form the 70S ribosome, for tRNA binding and peptide bond formation. It has been suggested to have peptidyltransferase activity; this is somewhat controversial. Makes several contacts with the 16S rRNA in the 70S ribosome. This Roseobacter denitrificans (strain ATCC 33942 / OCh 114) (Erythrobacter sp. (strain OCh 114)) protein is Large ribosomal subunit protein uL2.